The following is a 300-amino-acid chain: Acetaldehyde dehydrogenase 3 (300 aa).

An NAD(+)-binding site is contributed by 11 to 14 (SGNI). Cys-126 (acyl-thioester intermediate) is an active-site residue. Residues 157 to 165 (SAGPGTRAN) and Asn-276 contribute to the NAD(+) site.

This sequence belongs to the acetaldehyde dehydrogenase family.

The enzyme catalyses acetaldehyde + NAD(+) + CoA = acetyl-CoA + NADH + H(+). This Rhodococcus jostii (strain RHA1) protein is Acetaldehyde dehydrogenase 3 (hsaG).